The primary structure comprises 309 residues: Cyclin-dependent kinase B1-1 (309 aa).

The region spanning 4–301 (YEKLEKVGEG…AKTALDHPYF (298 aa)) is the Protein kinase domain. ATP-binding positions include 10–18 (VGEGTYGKV) and lysine 33. Tyrosine 15 is modified (phosphotyrosine). Residue aspartate 142 is the Proton acceptor of the active site. Threonine 176 is subject to Phosphothreonine; by CAK.

It belongs to the protein kinase superfamily. CMGC Ser/Thr protein kinase family. CDC2/CDKX subfamily. In terms of assembly, interacts with CKS1. Interacts with CYCU3-1. Interacts with SIM, SMR1 and SMR2. Highly expressed in guard cells and stomatal precursor cells of cotyledons. Expressed in roots, stems, flowers and siliques.

The protein resides in the nucleus. The catalysed reaction is L-seryl-[protein] + ATP = O-phospho-L-seryl-[protein] + ADP + H(+). It catalyses the reaction L-threonyl-[protein] + ATP = O-phospho-L-threonyl-[protein] + ADP + H(+). The enzyme catalyses [DNA-directed RNA polymerase] + ATP = phospho-[DNA-directed RNA polymerase] + ADP + H(+). With respect to regulation, phosphorylation at Thr-14 or Tyr-15 inactivates the enzyme, while phosphorylation at Thr-176 activates it. Its function is as follows. May control G2/M (mitosis) phase progression. Plays a role in regulating seedling growth in darkness via regulation of hypocotyl cell elongation and cotyledon cell development. Plays a role in stomatal development. Required to suppress endoreduplication. Together with CDKB1-2, promotes both the last division in the stomatal cell lineage as well as the number of stomata. In collaboration with MYB124 and MYB88, restrict the G1/S transition and chloroplast and nuclear number during stomatal formation, and normally maintain fate and developmental progression throughout the stomatal cell lineage. This is Cyclin-dependent kinase B1-1 (CDKB1-1) from Arabidopsis thaliana (Mouse-ear cress).